We begin with the raw amino-acid sequence, 326 residues long: Vitamin B12 import system permease protein BtuC (326 aa).

9 consecutive transmembrane segments (helical) span residues tryptophan 15–glutamate 35, leucine 61–phenylalanine 81, proline 88–glycine 108, leucine 112–leucine 132, leucine 146–phenylalanine 166, glycine 184–isoleucine 204, glycine 240–isoleucine 260, valine 274–alanine 294, and glutamate 302–leucine 322.

Belongs to the binding-protein-dependent transport system permease family. FecCD subfamily. The complex is composed of two ATP-binding proteins (BtuD), two transmembrane proteins (BtuC) and a solute-binding protein (BtuF).

It localises to the cell inner membrane. In terms of biological role, part of the ABC transporter complex BtuCDF involved in vitamin B12 import. Involved in the translocation of the substrate across the membrane. The protein is Vitamin B12 import system permease protein BtuC of Escherichia coli O7:K1 (strain IAI39 / ExPEC).